The following is a 405-amino-acid chain: Tyrosine-protein phosphatase non-receptor type eak-6 (405 aa).

In terms of domain architecture, Tyrosine-protein phosphatase spans isoleucine 30 to tyrosine 309. The Phosphocysteine intermediate role is filled by cysteine 248.

The protein belongs to the protein-tyrosine phosphatase family. Expressed in the 2 embryonic head hypodermal cells XXXL/R.

Its subcellular location is the cytoplasm. It localises to the cell membrane. The enzyme catalyses O-phospho-L-tyrosyl-[protein] + H2O = L-tyrosyl-[protein] + phosphate. Functionally, putative phosphatase which, together with eak-4 and sdf-9, negatively regulates dauer larva formation downstream of insulin-like receptor daf-2 and in parallel of age-1, pdk-1 and akt-1. The sequence is that of Tyrosine-protein phosphatase non-receptor type eak-6 from Caenorhabditis elegans.